We begin with the raw amino-acid sequence, 61 residues long: Small ribosomal subunit protein uS14B (61 aa).

Residues Cys24, Cys27, Cys40, and Cys43 each coordinate Zn(2+).

It belongs to the universal ribosomal protein uS14 family. Zinc-binding uS14 subfamily. In terms of assembly, part of the 30S ribosomal subunit. Contacts proteins S3 and S10. Requires Zn(2+) as cofactor.

Binds 16S rRNA, required for the assembly of 30S particles and may also be responsible for determining the conformation of the 16S rRNA at the A site. The polypeptide is Small ribosomal subunit protein uS14B (Ligilactobacillus salivarius (strain UCC118) (Lactobacillus salivarius)).